Reading from the N-terminus, the 300-residue chain is Ribosomal protein bS6--L-glutamate ligase (300 aa).

The ATP-grasp domain occupies 104 to 287 (MQLLARQGID…IAGKMIRWIE (184 aa)). ATP is bound by residues Lys-141, 178-179 (EY), Asp-187, and 211-213 (RSN). Asp-248, Glu-260, and Asn-262 together coordinate Mg(2+). Mn(2+)-binding residues include Asp-248, Glu-260, and Asn-262.

This sequence belongs to the RimK family. Mg(2+) is required as a cofactor. The cofactor is Mn(2+).

In terms of biological role, an L-glutamate ligase that catalyzes the ATP-dependent post-translational addition of glutamate residues to the C-terminus of ribosomal protein bS6 (RpsF). Is also able to catalyze the synthesis of poly-alpha-glutamate in vitro, via ATP hydrolysis from unprotected glutamate as substrate. The number of glutamate residues added to either RpsF or to poly-alpha-glutamate changes with pH. This chain is Ribosomal protein bS6--L-glutamate ligase, found in Shigella boydii serotype 4 (strain Sb227).